Here is a 1420-residue protein sequence, read N- to C-terminus: MKDLVKFLKAQSKSNDDFDVIKIGLASPDKIRSWSFGEVKKPETINYRTFKPERDGLFCARIFGPVKDYECLCGKYKRLKHRGVICEKCGVEVTQTKVRRDRMGHIELACPVAHIWFLKSLPSRIGLILDMPLRDIERVLYFESYVVTEPGMTDLEKNQLLTEEQYLEAEERWGDEFDAKMGAEGIQVLLRDMDLEHQCEVMREELQETNSETKRKKITKRLKLLEAFQQSGNKPEWMVMTVLPVLPPDLRPLVPLDGGRFATSDLNDLYRRVINRNNRLKRLLGLVAPDIIVRNEKRMLQESVDALLDNGRRGRAITGSNKRPLKSLADMIKGKQGRFRQNLLGKRVDYSGRSVITVGPYLHLHQCGLPKKMALELFRPFIYSKLESRGIASTIKAAKKMVEREEPIVWDILAEVIREHPILLNRAPTLHRLGIQAFEPLLIEGKAIQLHPLVCAAFNADFDGDQMAVHVPLTLEAQLEARALMMSTNNVLSPASGDPIIVPSQDVVLGLYYMTRDKVNGKGEGMYFLDPREAEKAYRTGQVELHARVKVRITEYSKNEAGEFLAETNLVDTTIGRAILWMIAPKGMPFSVFNQTLGKKAISKLINESYRRLGLKESVVLADQIMYTGFAYAARSGVSVGIDDMVIPAQKNDIITAAEAEVAEIQEQFNSGLVTAGERYNKVIDIWAAANERVAKAMMENLSTEEMLNREGNPEKQASFNSIFMMADSGARGSAVQIRQLAGMRGLMARPDGSIIETPITANFREGLNVLQYFISTHGARKGLADTALKTANSGYLTRRLVDVAQDLVITEDDCGTHEGIVMTPLIEGGDVKEALRDRVLGRVVAEDVLKPGTEQILIPRNTLIDEKWCDVIDVESVDVIKVRSVVTCNTDFGVCAKCYGRDLARGHLINQGEAVGVIAAQSIGEPGTQLTMRTFHIGGAASAAAKESSIQVKNAGTIKLANAKFVTNKEGKIVLTSRNTELTVIDIFGRTKENYKVPYGAVLSKNDGAEVGVGEIVANWDPHTMPVISEVSGRIQFSDIVDGLTVARQTDDLTGLSSIVVQDVGERATAGKDLRPALRLVDAKGNDIFIPGTDVAAQYFLPGKAIVTLDDGAEIAVGEALARIPQESVGTKDITGGLPRVADLFEARKPKEAAILAEISGIVSFGKETKGKRRLVITPAEGEAFEEMIPKWRQLNVFEGEMVQRGDIISDGAETPHDILRLRGVHAVTDYIVNEVQEVYRLQGVKINDKHIEVIVRQMLRKAVITNAYDSEFLEGEQVEVARVKIANRKRAEEGKPLVEFERELLGITKASLATESFISAASFQETTRVLTEAAVAGKRDELRGLKENVIVGRLIPAGTGFAYHQARAKKRVVAEQPFEMPVSKNAFATEADIEAEFEFVADEATQNLAALLNATDEE.

Zn(2+)-binding residues include C71, C73, C86, and C89. Mg(2+) is bound by residues D461, D463, and D465. The Zn(2+) site is built by C815, C889, C896, and C899.

This sequence belongs to the RNA polymerase beta' chain family. As to quaternary structure, the RNAP catalytic core consists of 2 alpha, 1 beta, 1 beta' and 1 omega subunit. When a sigma factor is associated with the core the holoenzyme is formed, which can initiate transcription. Requires Mg(2+) as cofactor. Zn(2+) is required as a cofactor.

It catalyses the reaction RNA(n) + a ribonucleoside 5'-triphosphate = RNA(n+1) + diphosphate. DNA-dependent RNA polymerase catalyzes the transcription of DNA into RNA using the four ribonucleoside triphosphates as substrates. The protein is DNA-directed RNA polymerase subunit beta' of Haemophilus ducreyi (strain 35000HP / ATCC 700724).